A 394-amino-acid polypeptide reads, in one-letter code: Class II hydrophobin TH1 (394 aa).

The signal sequence occupies residues 1–16 (MKFLAAASLLVASTLA). The disordered stretch occupies residues 17 to 42 (VPTSSGGSCRPRPPPGGGNGGNGGNG). The segment covering 33–42 (GGNGGNGGNG) has biased composition (gly residues). The segment at 48–117 (GYQPCPAGLY…GQAVLCQDSI (70 aa)) is hydrophobin 1. Intrachain disulfides connect cysteine 52/cysteine 101, cysteine 62/cysteine 92, cysteine 63/cysteine 75, and cysteine 102/cysteine 113. The disordered stretch occupies residues 135-157 (GNGGNNGGNTDYPGGNGGNNGGN). Positions 148–157 (GGNGGNNGGN) are enriched in gly residues. Hydrophobin stretches follow at residues 200–270 (GYQA…QPAI) and 326–394 (GSFK…CTGA).

This sequence belongs to the cerato-ulmin hydrophobin family. In terms of assembly, homotetramer. Further self-assembles to form highly ordered films at water-air interfaces through intermolecular interactions. Several N-termini starting at positions 17, 20, 22, 28 and 48 have been identified by direct sequencing. In terms of processing, contains a number of intrachain disulfide bonds. Post-translationally, not glycosylated.

Its subcellular location is the secreted. It is found in the cell wall. In terms of biological role, aerial growth, conidiation, and dispersal of filamentous fungi in the environment rely upon a capability of their secreting small amphipathic proteins called hydrophobins (HPBs) with low sequence identity. Class I can self-assemble into an outermost layer of rodlet bundles on aerial cell surfaces, conferring cellular hydrophobicity that supports fungal growth, development and dispersal; whereas Class II form highly ordered films at water-air interfaces through intermolecular interactions but contribute nothing to the rodlet structure. TH1 is a class II hydrophobin that reduces water surface tension dramatically upon assembly at the water-air interface and plays a role in the formation of aerial hyphae. The sequence is that of Class II hydrophobin TH1 (TH1) from Claviceps fusiformis (Ergot fungus).